The chain runs to 349 residues: MAAEEEEVDSADTGERSGWLTGWLPTWCPTSTSHLKEAEEKMLKCVPCTYKKEPVHISNGNKIWTLKFSHNISNKTPLVLLHGFGGGLGLWALNFGDLCTNRPVYAFDLLGFGRSSRPRFDSDAEEVENQFVESIEEWRCALGLDKMILLGHNLGGFLAAAYSLKYPSRVNHLILVEPWGFPERPDLADQDRPIPVWIRALGAALTPFNPLAGLRIAGPFGLSLVQRLRPDFKRKYSSMFEDDTVTEYIYHCNVQTPSGETAFKNMTIPYGWAKRPMLQRIGKMHPDIPVSVIFGARSCIDGNSGTSIQSLRPHSYVKTIAILGAGHYVYADQPEEFNQKVKEICDTVD.

An N-acetylalanine modification is found at Ala-2. The region spanning 77 to 184 (PLVLLHGFGG…LVEPWGFPER (108 aa)) is the AB hydrolase-1 domain. At Ser-122 the chain carries Phosphoserine. The HXXXXD motif motif lies at 327 to 332 (HYVYAD).

Belongs to the peptidase S33 family. ABHD4/ABHD5 subfamily. As to quaternary structure, interacts with ADRP, PLIN and PNPLA2. Interacts with PLIN5; promotes interaction with PNPLA2.

Its subcellular location is the cytoplasm. It localises to the lipid droplet. The catalysed reaction is a 1-acyl-sn-glycero-3-phosphate + an acyl-CoA = a 1,2-diacyl-sn-glycero-3-phosphate + CoA. The enzyme catalyses 1-(9Z-octadecenoyl)-sn-glycero-3-phosphate + (9Z)-octadecenoyl-CoA = 1,2-di-(9Z-octadecenoyl)-sn-glycero-3-phosphate + CoA. It carries out the reaction 1-(9Z-octadecenoyl)-sn-glycero-3-phosphate + hexadecanoyl-CoA = 1-(9Z)-octadecenoyl-2-hexadecanoyl-sn-glycero-3-phosphate + CoA. It catalyses the reaction 1-(9Z-octadecenoyl)-sn-glycero-3-phosphate + octadecanoyl-CoA = 1-(9Z-octadecenoyl)-2-octadecanoyl-sn-glycero-3-phosphate + CoA. The catalysed reaction is 1-(9Z-octadecenoyl)-sn-glycero-3-phosphate + (5Z,8Z,11Z,14Z)-eicosatetraenoyl-CoA = 1-(9Z)-octadecenoyl-2-(5Z,8Z,11Z,14Z)-eicosatetraenoyl-sn-glycero-3-phosphate + CoA. The enzyme catalyses eicosanoyl-CoA + 1-(9Z-octadecenoyl)-sn-glycero-3-phosphate = 1-(9Z)-octadecenoyl-2-eicosanoyl-sn-glycero-3-phosphate + CoA. It carries out the reaction 1-hexadecanoyl-sn-glycero-3-phosphate + (9Z)-octadecenoyl-CoA = 1-hexadecanoyl-2-(9Z-octadecenoyl)-sn-glycero-3-phosphate + CoA. It catalyses the reaction 1-octadecanoyl-sn-glycero-3-phosphate + (9Z)-octadecenoyl-CoA = 1-octadecanoyl-2-(9Z-octadecenoyl)-sn-glycero-3-phosphate + CoA. The catalysed reaction is 1-(5Z,8Z,11Z,14Z-eicosatetraenoyl)-sn-glycero-3-phosphate + (9Z)-octadecenoyl-CoA = 1-(5Z,8Z,11Z,14Z)-eicosatetraenoyl-2-(9Z)-octadecenoyl-sn-glycero-3-phosphate + CoA. Its activity is regulated as follows. Acyltransferase activity is inhibited by detergents such as Triton X-100 and 3-[(3-cholamidopropyl)dimethylammonio]-1-propanesulfonate (CHAPS). Acyltransferase activity is inhibited by the presence of magnesium and calcium. Functionally, coenzyme A-dependent lysophosphatidic acid acyltransferase that catalyzes the transfer of an acyl group on a lysophosphatidic acid. Functions preferentially with 1-oleoyl-lysophosphatidic acid followed by 1-palmitoyl-lysophosphatidic acid, 1-stearoyl-lysophosphatidic acid and 1-arachidonoyl-lysophosphatidic acid as lipid acceptor. Functions preferentially with arachidonoyl-CoA followed by oleoyl-CoA as acyl group donors. Functions in phosphatidic acid biosynthesis. May regulate the cellular storage of triacylglycerol through activation of the phospholipase PNPLA2. Involved in keratinocyte differentiation. Regulates lipid droplet fusion. This Pongo abelii (Sumatran orangutan) protein is 1-acylglycerol-3-phosphate O-acyltransferase ABHD5.